The sequence spans 307 residues: 1-aminocyclopropane-1-carboxylate oxidase 5 (307 aa).

A coiled-coil region spans residues 106-134; the sequence is SNIKETMGEYREEVRKLASKMMEVMDENL. One can recognise a Fe2OG dioxygenase domain in the interval 152–256; sequence GEETAFFGTK…RRSIASFYNP (105 aa). Positions 180, 182, and 237 each coordinate Fe cation. Residue R247 coordinates 2-oxoglutarate.

Belongs to the iron/ascorbate-dependent oxidoreductase family. Fe(2+) serves as cofactor.

The catalysed reaction is 1-aminocyclopropane-1-carboxylate + L-ascorbate + O2 = ethene + L-dehydroascorbate + hydrogen cyanide + CO2 + 2 H2O. Its pathway is alkene biosynthesis; ethylene biosynthesis via S-adenosyl-L-methionine; ethylene from S-adenosyl-L-methionine: step 2/2. Its function is as follows. Enzyme involved in the ethylene biosynthesis. The sequence is that of 1-aminocyclopropane-1-carboxylate oxidase 5 from Arabidopsis thaliana (Mouse-ear cress).